The chain runs to 132 residues: Antileukoproteinase (132 aa).

Positions 1–24 (MKFSGLFPFLLLALGTLALWAVEG) are cleaved as a signal peptide. Positions 28–76 (EALKAGACPPRKSAQCFGNEKPRCSSDWQCPHKKKCCLDTCGTECLDPV) constitute a WAP 1 domain. Disulfide bonds link cysteine 35-cysteine 64, cysteine 43-cysteine 68, cysteine 51-cysteine 63, and cysteine 57-cysteine 72. Asparagine 77 carries an N-linked (GlcNAc...) asparagine glycan. The 49-residue stretch at 82-130 (VKKKPGTCPVIHGQCLMLKPLNHCETDDQCIGALKCCKAMCGKVCLSPV) folds into the WAP 2 domain. Disulfide bonds link cysteine 89/cysteine 118, cysteine 96/cysteine 122, cysteine 105/cysteine 117, and cysteine 111/cysteine 126.

As to quaternary structure, interacts with GRN; interaction protects progranulin from proteolysis. As to expression, detected in bronchoalveolar fluid (at protein level). Detected in large and small intestine, trachea, skin, lung and tongue.

Its subcellular location is the secreted. In terms of biological role, acid-stable proteinase inhibitor with strong affinities for trypsin, chymotrypsin, elastase, and cathepsin G. Modulates the inflammatory and immune responses after bacterial infection, and after infection by the intracellular parasite L.major. Down-regulates responses to bacterial lipopolysaccharide (LPS). Plays a role in regulating the activation of NF-kappa-B and inflammatory responses. Has antimicrobial activity against mycobacteria, but not against salmonella. Contributes to normal resistance against infection by M.tuberculosis. Required for normal resistance to infection by L.major. Required for normal wound healing, probably by preventing tissue damage by limiting protease activity. Together with ELANE, required for normal differentiation and proliferation of bone marrow myeloid cells. This Ovis aries (Sheep) protein is Antileukoproteinase (SLPI).